The following is a 156-amino-acid chain: Arginine repressor (156 aa).

It belongs to the ArgR family.

The protein localises to the cytoplasm. The protein operates within amino-acid biosynthesis; L-arginine biosynthesis [regulation]. In terms of biological role, regulates arginine biosynthesis genes. This chain is Arginine repressor, found in Yersinia pseudotuberculosis serotype I (strain IP32953).